The chain runs to 39 residues: Photosystem II reaction center protein L (39 aa).

Residues Ser18 to Phe38 traverse the membrane as a helical segment.

This sequence belongs to the PsbL family. As to quaternary structure, PSII is composed of 1 copy each of membrane proteins PsbA, PsbB, PsbC, PsbD, PsbE, PsbF, PsbH, PsbI, PsbJ, PsbK, PsbL, PsbM, PsbT, PsbX, PsbY, PsbZ, Psb30/Ycf12, peripheral proteins PsbO, CyanoQ (PsbQ), PsbU, PsbV and a large number of cofactors. It forms dimeric complexes.

The protein resides in the cellular thylakoid membrane. Functionally, one of the components of the core complex of photosystem II (PSII). PSII is a light-driven water:plastoquinone oxidoreductase that uses light energy to abstract electrons from H(2)O, generating O(2) and a proton gradient subsequently used for ATP formation. It consists of a core antenna complex that captures photons, and an electron transfer chain that converts photonic excitation into a charge separation. This subunit is found at the monomer-monomer interface and is required for correct PSII assembly and/or dimerization. This is Photosystem II reaction center protein L from Parasynechococcus marenigrum (strain WH8102).